Consider the following 213-residue polypeptide: MPPRALLLVDLQNDFCAGGALAVPEGDSTVDVANRLIDWCQSRGEAVIASQDWHPANHGSFASQHGVEPYTPGQLDGLPQTFWPDHCVQNSEGAQLHPLLHQKAIAAVFHKGENPLVDSYSAFFDNGRRQKTSLDDWLRDHEIDELIVMGLATDYCVKFTVLDALQLGYKVNVITDGCRGVNIQPQDSAHAFMEMSAAGATLYTLADWEETQG.

Catalysis depends on D10, which acts as the Proton acceptor. Zn(2+)-binding residues include D52, H54, and H86. Residue K111 is part of the active site. C156 functions as the Nucleophile in the catalytic mechanism.

Belongs to the isochorismatase family.

It carries out the reaction nicotinamide + H2O = nicotinate + NH4(+). The catalysed reaction is pyrazinamide + H2O = pyrazine-2-carboxylate + NH4(+). The protein operates within cofactor biosynthesis; nicotinate biosynthesis; nicotinate from nicotinamide: step 1/1. Catalyzes the deamidation of nicotinamide (NAM) into nicotinate. Likely functions in the cyclical salvage pathway for production of NAD from nicotinamide. Functionally, is also able to hydrolyze the first-line antituberculous drug pyrazinamide (PZA) into pyrazinoic acid in vitro, but this reaction is not considered to be physiologically relevant. In Escherichia coli (strain K12), this protein is Nicotinamidase.